We begin with the raw amino-acid sequence, 294 residues long: Small ribosomal subunit biogenesis GTPase RsgA 2, mitochondrial (294 aa).

A mitochondrion-targeting transit peptide spans 1-68; that stretch reads MQTFSSAAAL…RSFLAPVLPL (68 aa). Residues 155 to 294 form the CP-type G domain; it reads VSEVLDPPVA…VSFFLSYFIL (140 aa). 255–263 contacts GTP; it reads GPSGVGKSS.

Belongs to the TRAFAC class YlqF/YawG GTPase family.

The protein localises to the mitochondrion. This Arabidopsis thaliana (Mouse-ear cress) protein is Small ribosomal subunit biogenesis GTPase RsgA 2, mitochondrial.